The following is a 123-amino-acid chain: Large ribosomal subunit protein bL12 (123 aa).

It belongs to the bacterial ribosomal protein bL12 family. Homodimer. Part of the ribosomal stalk of the 50S ribosomal subunit. Forms a multimeric L10(L12)X complex, where L10 forms an elongated spine to which 2 to 4 L12 dimers bind in a sequential fashion. Binds GTP-bound translation factors.

Its function is as follows. Forms part of the ribosomal stalk which helps the ribosome interact with GTP-bound translation factors. Is thus essential for accurate translation. The protein is Large ribosomal subunit protein bL12 of Neisseria gonorrhoeae (strain NCCP11945).